The following is a 482-amino-acid chain: Adenylyltransferase and sulfurtransferase MOCS3-2 (482 aa).

ATP-binding positions include glycine 125, aspartate 146, 153–157 (NNLHR), lysine 170, and 214–215 (DN). Cysteine 255 and cysteine 258 together coordinate Zn(2+). Cysteine 272 functions as the Glycyl thioester intermediate; for adenylyltransferase activity in the catalytic mechanism. Cysteine 330 and cysteine 333 together coordinate Zn(2+). The 96-residue stretch at 385 to 480 (DGEPHLLLDV…WGQDVDPDFP (96 aa)) folds into the Rhodanese domain. Residue cysteine 440 is the Cysteine persulfide intermediate; for sulfurtransferase activity of the active site.

The protein in the N-terminal section; belongs to the HesA/MoeB/ThiF family. UBA4 subfamily. Zn(2+) is required as a cofactor.

Its subcellular location is the cytoplasm. The catalysed reaction is [molybdopterin-synthase sulfur-carrier protein]-C-terminal Gly-Gly + ATP + H(+) = [molybdopterin-synthase sulfur-carrier protein]-C-terminal Gly-Gly-AMP + diphosphate. It catalyses the reaction [molybdopterin-synthase sulfur-carrier protein]-C-terminal Gly-Gly-AMP + S-sulfanyl-L-cysteinyl-[cysteine desulfurase] + AH2 = [molybdopterin-synthase sulfur-carrier protein]-C-terminal-Gly-aminoethanethioate + L-cysteinyl-[cysteine desulfurase] + A + AMP + 2 H(+). It participates in tRNA modification; 5-methoxycarbonylmethyl-2-thiouridine-tRNA biosynthesis. Its pathway is cofactor biosynthesis; molybdopterin biosynthesis. Its function is as follows. Plays a central role in 2-thiolation of mcm(5)S(2)U at tRNA wobble positions of cytosolic tRNA(Lys), tRNA(Glu) and tRNA(Gln). Also essential during biosynthesis of the molybdenum cofactor. Acts by mediating the C-terminal thiocarboxylation of sulfur carriers URM1 and MOCS2A. Its N-terminus first activates URM1 and MOCS2A as acyl-adenylates (-COAMP), then the persulfide sulfur on the catalytic cysteine is transferred to URM1 and MOCS2A to form thiocarboxylation (-COSH) of their C-terminus. The reaction probably involves hydrogen sulfide that is generated from the persulfide intermediate and that acts as a nucleophile towards URM1 and MOCS2A. Subsequently, a transient disulfide bond is formed. Does not use thiosulfate as sulfur donor; NFS1 probably acting as a sulfur donor for thiocarboxylation reactions. The sequence is that of Adenylyltransferase and sulfurtransferase MOCS3-2 from Zea mays (Maize).